A 38-amino-acid chain; its full sequence is Large ribosomal subunit protein bL36 (38 aa).

This sequence belongs to the bacterial ribosomal protein bL36 family.

The polypeptide is Large ribosomal subunit protein bL36 (Thermotoga maritima (strain ATCC 43589 / DSM 3109 / JCM 10099 / NBRC 100826 / MSB8)).